We begin with the raw amino-acid sequence, 672 residues long: MMDAESARKNIEDLKARIEYHNRRYYQLDDPEISDAEYDSLLQELIALEKQFPQWLTEDSPSRRIGAAPLSKFAPAVHLSPMLSLANAFSEEEILEFDRRLKRFLDSSERLSFVVEPKIDGVAVNLIYSSGVLTTGATRGDGAKGEDVTQNIRTLHTIPLKIQNGSDERLPEQIEIRGEIYMETAAFRKLNERRLAAGEPPFANPRNAAAGSLRQLDASITARRPLKMFCYAVGIVRGRAFTYHHDVLHALKKWGFSVNPFIRQVEGIEKCIEFYRELQDLRNELPYEIDGMVIKVDDLSLQTRLGAVSRSPRWAVACKFAATQATTVIRDIIVNVGRTGTLTPVALMTPVKVGGVTVSRATLHNQDEIDKKDIRIGDTVLVQRAGDVIPEVVKVIVSNRSGREIPFKIPDTCPECGSEVVRLAGEAAHRCIGLSCPAQLRRHIQHFVSRGGMDIEGLGDKLVSQLVNQKLIHDPADLYYLSHDALLNLERMAEKSVSNLLSAIELSKHPSLDKIIFALGIRHVGEHISKILARRFRTLDALINTTENELLAIRDIGPEVSSSILEFFRNASNRRVIEKLKKAGVSPLETISPRSAPLTGKTFVFTGALSRMTRDEAKQIVESLGGQAAGTVTKKTDYVVAGEAAGSKLQKAQKAGIAILSEEEFLRLAGKI.

NAD(+) contacts are provided by residues 35-39 (DAEYD), 84-85 (SL), and Glu116. Catalysis depends on Lys118, which acts as the N6-AMP-lysine intermediate. Residues Arg139, Glu179, Lys295, and Lys319 each contribute to the NAD(+) site. Zn(2+) is bound by residues Cys413, Cys416, Cys431, and Cys436. Positions 593-672 (PRSAPLTGKT…EEFLRLAGKI (80 aa)) constitute a BRCT domain.

Belongs to the NAD-dependent DNA ligase family. LigA subfamily. It depends on Mg(2+) as a cofactor. Mn(2+) serves as cofactor.

The enzyme catalyses NAD(+) + (deoxyribonucleotide)n-3'-hydroxyl + 5'-phospho-(deoxyribonucleotide)m = (deoxyribonucleotide)n+m + AMP + beta-nicotinamide D-nucleotide.. Functionally, DNA ligase that catalyzes the formation of phosphodiester linkages between 5'-phosphoryl and 3'-hydroxyl groups in double-stranded DNA using NAD as a coenzyme and as the energy source for the reaction. It is essential for DNA replication and repair of damaged DNA. The chain is DNA ligase from Syntrophus aciditrophicus (strain SB).